A 1481-amino-acid chain; its full sequence is Cystic fibrosis transmembrane conductance regulator (1481 aa).

Residues 1–77 (MQRSPLEKAS…KLINALRRCF (77 aa)) lie on the Cytoplasmic side of the membrane. Residues 78 to 98 (FWRFMFYGIILYLGEVTKAVQ) form a helical membrane-spanning segment. Residues 81–365 (FMFYGIILYL…WAVQTWYDSL (285 aa)) form the ABC transmembrane type-1 1 domain. At 99–122 (PLLLGRIIASYDPDNKVERSIAIY) the chain is on the extracellular side. Residues 123–146 (LGIGLCLLFIVRTLLLHPAIFGLH) form a helical membrane-spanning segment. The Cytoplasmic portion of the chain corresponds to 147-195 (HIGMQMRIAMFSLIYKKTLKLSSRVLDKISIGQLVSLLSNNLNKFDEGL). The helical transmembrane segment at 196 to 216 (ALAHFVWIAPLQVTLLMGLLW) threads the bilayer. The Extracellular portion of the chain corresponds to 217-222 (ELLQAF). The helical transmembrane segment at 223-243 (TFCGLAFLVVLAFLQAGLGKM) threads the bilayer. Residues 244 to 298 (MMKYRDQRAGKINERLVITSEIIENIQSVKAYCWEEAMEKIIENLRQTELKLTRK) lie on the Cytoplasmic side of the membrane. Residues 299 to 319 (AAYVRYLNSSAFFFSGFFVVF) traverse the membrane as a helical segment. Topologically, residues 320 to 339 (LSVLPYALLKGIILRKIFTT) are extracellular. The helical transmembrane segment at 340-358 (ISFCIVLRMAVTRQFPWAV) threads the bilayer. The Cytoplasmic segment spans residues 359–858 (QTWYDSLGAI…YLRYITVHKS (500 aa)). ATP-binding positions include Trp401, 457–464 (GSTGAGKT), and Gln492. The region spanning 423–645 (NGDNNLFFSN…RPDFSSKLMG (223 aa)) is the ABC transporter 1 domain. Residue Cys523 is the site of S-palmitoyl cysteine attachment. A phosphoserine mark is found at Ser548 and Ser659. The segment at 653-831 (TAERRNSIIT…EEINEEDLRD (179 aa)) is disordered R region. Ser669 is subject to Phosphoserine; by PKA. The residue at position 685 (Ser685) is a Phosphoserine. Residue Lys687 forms a Glycyl lysine isopeptide (Lys-Gly) (interchain with G-Cter in ubiquitin) linkage. A phosphoserine mark is found at Ser699 and Ser711. Thr716 is subject to Phosphothreonine. 5 positions are modified to phosphoserine: Ser736, Ser767, Ser790, Ser795, and Ser813. Residues 859–879 (LMFVLIWCLVVFLAEVAASLV) traverse the membrane as a helical segment. Positions 859-1155 (LMFVLIWCLV…AVNSSIDVDS (297 aa)) constitute an ABC transmembrane type-1 2 domain. Residues 880 to 918 (VLCLFPKILFQDKGNSTKSANNSYAVIITSTSSYYIFYI) lie on the Extracellular side of the membrane. 2 N-linked (GlcNAc...) asparagine glycosylation sites follow: Asn894 and Asn900. The discontinuously helical transmembrane segment at 919–939 (YVGVADTLLALGLFRGLPLVH) threads the bilayer. Residues 940 to 990 (TLITVSKTLHHKMLQSVLQAPMSTLNTLKTGGILNRFSKDIAVLDDLLPLT) lie on the Cytoplasmic side of the membrane. Residues 991 to 1011 (IFDFVQLLLIVIGAVVVVSVL) traverse the membrane as a helical segment. At 1012-1013 (QP) the chain is on the extracellular side. A helical transmembrane segment spans residues 1014–1034 (YIFLATVPVIAAFILLRAYFL). Residues 1035–1095 (HTSQQLKQLE…TANWFLYLST (61 aa)) lie on the Cytoplasmic side of the membrane. A helical membrane pass occupies residues 1096–1116 (LRWFQMRIEMIFVIFFIAVTF). The Extracellular segment spans residues 1117 to 1130 (ISILTTGEGEGRVG). Residues 1131–1151 (IILTLAMNIMGTLQWAVNSSI) traverse the membrane as a helical segment. Topologically, residues 1152–1481 (DVDSLMRSVS…TEEEVQETKL (330 aa)) are cytoplasmic. Positions 1211-1444 (MTVKDLTAKY…KSLFRQAISP (234 aa)) constitute an ABC transporter 2 domain. ATP is bound by residues Tyr1220 and 1245-1252 (GRTGSGKS). The tract at residues 1387–1481 (RTLKQAFADC…TEEEVQETKL (95 aa)) is interaction with GORASP2. The S-palmitoyl cysteine moiety is linked to residue Cys1396. The disordered stretch occupies residues 1452–1481 (PQRNSSRQKSRSNIAALKEETEEEVQETKL). Positions 1453-1464 (QRNSSRQKSRSN) are enriched in low complexity. Ser1457 is modified (phosphoserine). Residues 1471–1481 (ETEEEVQETKL) are compositionally biased toward acidic residues. The PDZ-binding motif lies at 1479-1481 (TKL).

The protein belongs to the ABC transporter superfamily. ABCC family. CFTR transporter (TC 3.A.1.202) subfamily. Monomer; does not require oligomerization for channel activity. May form oligomers in the membrane. Interacts with SLC26A3, SLC26A6 and NHERF1. Interacts with SHANK2. Interacts with MYO6. Interacts (via C-terminus) with GOPC (via PDZ domain); this promotes CFTR internalization and thereby decreases channel activity. Interacts with SLC4A7 through NHERF1. Found in a complex with MYO5B and RAB11A. Interacts with ANO1. Interacts with SLC26A8. Interacts with AHCYL1; the interaction increases CFTR activity. Interacts with CSE1L. The core-glycosylated form interacts with GORASP2 (via PDZ GRASP-type 1 domain) in respone to ER stress. Interacts with MARCHF2; the interaction leads to CFTR ubiqtuitination and degradation. Interacts with ADGRG2. N-glycosylated. Post-translationally, phosphorylated; cAMP treatment promotes phosphorylation and activates the channel. Dephosphorylation decreases the ATPase activity (in vitro). Phosphorylation at PKA sites activates the channel. Phosphorylation at PKC sites enhances the response to phosphorylation by PKA. Phosphorylated by AMPK; this inhibits channel activity. In terms of processing, ubiquitinated, leading to its degradation in the lysosome. Deubiquitination by USP10 in early endosomes enhances its endocytic recycling to the cell membrane. Ubiquitinated by RNF185 during ER stress. Ubiquitinated by MARCHF2.

It localises to the apical cell membrane. The protein localises to the early endosome membrane. Its subcellular location is the cell membrane. It is found in the recycling endosome membrane. The protein resides in the endoplasmic reticulum membrane. It localises to the nucleus. It carries out the reaction ATP + H2O + closed Cl(-) channel = ADP + phosphate + open Cl(-) channel.. It catalyses the reaction chloride(in) = chloride(out). The enzyme catalyses hydrogencarbonate(in) = hydrogencarbonate(out). The catalysed reaction is ATP + H2O = ADP + phosphate + H(+). Functionally, epithelial ion channel that plays an important role in the regulation of epithelial ion and water transport and fluid homeostasis. Mediates the transport of chloride ions across the cell membrane. Possesses an intrinsic ATPase activity and utilizes ATP to gate its channel; the passive flow of anions through the channel is gated by cycles of ATP binding and hydrolysis by the ATP-binding domains. The ion channel is also permeable to HCO(3)(-); selectivity depends on the extracellular chloride concentration. Exerts its function also by modulating the activity of other ion channels and transporters. Contributes to the regulation of the pH and the ion content of the epithelial fluid layer. Modulates the activity of the epithelial sodium channel (ENaC) complex, in part by regulating the cell surface expression of the ENaC complex. May regulate bicarbonate secretion and salvage in epithelial cells by regulating the transporter SLC4A7. Can inhibit the chloride channel activity of ANO1. Plays a role in the chloride and bicarbonate homeostasis during sperm epididymal maturation and capacitation. The protein is Cystic fibrosis transmembrane conductance regulator of Muntiacus muntjak (Barking deer).